The sequence spans 155 residues: Ribosome maturation factor RimP (155 aa).

Belongs to the RimP family.

The protein resides in the cytoplasm. In terms of biological role, required for maturation of 30S ribosomal subunits. The polypeptide is Ribosome maturation factor RimP (Prochlorococcus marinus subsp. pastoris (strain CCMP1986 / NIES-2087 / MED4)).